A 523-amino-acid polypeptide reads, in one-letter code: UDP-N-acetylmuramyl-tripeptide synthetase (523 aa).

A UDP-N-acetyl-alpha-D-muramoyl-L-alanyl-D-glutamate-binding site is contributed by serine 38. 116-122 (GTKGKTT) contributes to the ATP binding site. UDP-N-acetyl-alpha-D-muramoyl-L-alanyl-D-glutamate is bound by residues 162–163 (TT), serine 189, and arginine 197. An N6-carboxylysine modification is found at lysine 231.

This sequence belongs to the MurCDEF family. MurE subfamily. Post-translationally, carboxylation is probably crucial for Mg(2+) binding and, consequently, for the gamma-phosphate positioning of ATP.

It is found in the cytoplasm. It participates in cell wall biogenesis; peptidoglycan biosynthesis. Its function is as follows. Catalyzes the addition of an amino acid to the nucleotide precursor UDP-N-acetylmuramoyl-L-alanyl-D-glutamate (UMAG) in the biosynthesis of bacterial cell-wall peptidoglycan. The chain is UDP-N-acetylmuramyl-tripeptide synthetase from Lactobacillus acidophilus (strain ATCC 700396 / NCK56 / N2 / NCFM).